The sequence spans 337 residues: Eukaryotic translation initiation factor 3 subunit H (337 aa).

Positions 21–153 (VQCDGLAVMK…LKAYRLTPQA (133 aa)) constitute an MPN domain.

This sequence belongs to the eIF-3 subunit H family. As to quaternary structure, component of the eukaryotic translation initiation factor 3 (eIF-3) complex. The eIF-3 complex interacts with pix. Interacts with mxt.

It localises to the cytoplasm. In terms of biological role, component of the eukaryotic translation initiation factor 3 (eIF-3) complex, which is involved in protein synthesis of a specialized repertoire of mRNAs and, together with other initiation factors, stimulates binding of mRNA and methionyl-tRNAi to the 40S ribosome. The eIF-3 complex specifically targets and initiates translation of a subset of mRNAs involved in cell proliferation. The polypeptide is Eukaryotic translation initiation factor 3 subunit H (Drosophila virilis (Fruit fly)).